The sequence spans 468 residues: Chromosomal replication initiator protein DnaA (468 aa).

A domain I, interacts with DnaA modulators region spans residues Met-1–Ser-84. The interval Ser-84–Ser-131 is domain II. A disordered region spans residues Leu-112 to Asn-132. The segment covering Lys-114 to His-129 has biased composition (basic and acidic residues). Positions Asn-132–Ala-348 are domain III, AAA+ region. Residues Gly-176, Gly-178, Lys-179, and Thr-180 each coordinate ATP. The segment at Asn-349 to Ser-468 is domain IV, binds dsDNA.

It belongs to the DnaA family. In terms of assembly, oligomerizes as a right-handed, spiral filament on DNA at oriC.

The protein localises to the cytoplasm. In terms of biological role, plays an essential role in the initiation and regulation of chromosomal replication. ATP-DnaA binds to the origin of replication (oriC) to initiate formation of the DNA replication initiation complex once per cell cycle. Binds the DnaA box (a 9 base pair repeat at the origin) and separates the double-stranded (ds)DNA. Forms a right-handed helical filament on oriC DNA; dsDNA binds to the exterior of the filament while single-stranded (ss)DNA is stabiized in the filament's interior. The ATP-DnaA-oriC complex binds and stabilizes one strand of the AT-rich DNA unwinding element (DUE), permitting loading of DNA polymerase. After initiation quickly degrades to an ADP-DnaA complex that is not apt for DNA replication. Binds acidic phospholipids. The polypeptide is Chromosomal replication initiator protein DnaA (Aliivibrio salmonicida (strain LFI1238) (Vibrio salmonicida (strain LFI1238))).